An 81-amino-acid chain; its full sequence is Elicitor peptide 4 (81 aa).

Residues 1–54 (MERGVSYYLWIPFKFIHQTFGSLLLKLLGLRSPSDHSFPEDGEEEVKVVEVSSR) constitute a propeptide that is removed on maturation. The segment at 57–81 (PGKKNVLKKSRESSGKPGGTNKKPF) is disordered.

It belongs to the brassicaceae elicitor peptide family.

Functionally, elicitor of plant defense. The protein is Elicitor peptide 4 (PEP4) of Arabidopsis thaliana (Mouse-ear cress).